The primary structure comprises 151 residues: MFGGAHELSIDSKGRLAVPAKFRDILSRLYTPAVVVTLESKHKLLMYPVAEWEKVAAQLLNLKVADNPVLRRFQNLLLHNAEILEWDSAGRVLLPAGLRKRVDFDREVVLVGRANRLELWGREQWEAEMVQALDDDPDELAFQLGQTDLQL.

SpoVT-AbrB domains are found at residues 5-51 (AHEL…PVAE) and 81-124 (AEIL…GREQ).

It belongs to the MraZ family. Forms oligomers.

Its subcellular location is the cytoplasm. It is found in the nucleoid. This Neisseria meningitidis serogroup C / serotype 2a (strain ATCC 700532 / DSM 15464 / FAM18) protein is Transcriptional regulator MraZ.